The chain runs to 604 residues: Deuterosome assembly protein 1 (604 aa).

4 coiled-coil regions span residues C14–T59, M85–Q197, I226–S278, and Q336–K399. Residue S547 is modified to Phosphoserine. A coiled-coil region spans residues A558–N601.

Belongs to the CEP63 family. As to quaternary structure, interacts with CEP152; the interaction is mutually exclusive with CEP63.

The protein resides in the cytoplasm. Functionally, key structural component of the deuterosome, a structure that promotes de novo centriole amplification in multiciliated cells. Deuterosome-mediated centriole amplification occurs in terminally differentiated multiciliated cells and can generate more than 100 centrioles. Probably sufficient for the specification and formation of the deuterosome inner core. Interacts with CEP152 and recruits PLK4 to activate centriole biogenesis. The protein is Deuterosome assembly protein 1 of Homo sapiens (Human).